Here is a 305-residue protein sequence, read N- to C-terminus: Aquaporin-1 (305 aa).

The tract at residues 1–34 is disordered; that stretch reads MSSNDSNDTDKQHTRLDPTGVDDAYIPPEQPETK. Over 1-48 the chain is Cytoplasmic; sequence MSSNDSNDTDKQHTRLDPTGVDDAYIPPEQPETKHHRFKISRDTLRDH. The helical transmembrane segment at 49 to 69 threads the bilayer; that stretch reads FIAAVGEFCGTFMFLWCAYVI. Over 70–91 the chain is Extracellular; it reads CNVANHDVALVAAPDGSHPGQL. The chain crosses the membrane as a helical span at residues 92 to 112; it reads IMIAIGFGFSVMFSIWCFAGV. Topologically, residues 113–136 are cytoplasmic; sequence SGGALNPAMSLSLCLARAVSPTRC. The NPA 1 motif lies at 118 to 120; it reads NPA. A helical transmembrane segment spans residues 137–157; that stretch reads VVMWVSQIVAGMAAGGAASAM. The Extracellular segment spans residues 158 to 176; sequence TPGEVLFANSLGLGCSRTR. Residues 177 to 197 form a helical membrane-spanning segment; that stretch reads GLFLEMFGTAILCLTVLMTAV. Residues 198–203 lie on the Cytoplasmic side of the membrane; it reads EKRETN. A helical transmembrane segment spans residues 204 to 224; the sequence is FMAALPIGISLFIAHVALTAY. Residues 225–248 lie on the Extracellular side of the membrane; it reads TGTGVNPARSLGAAVAARYFPHYH. Residues 230–232 carry the NPA 2 motif; sequence NPA. Residues 249–269 traverse the membrane as a helical segment; it reads WIYWIGTLLGSILAWSVWQLL. The Cytoplasmic segment spans residues 270–305; sequence QILDYTTYVTAEKAASTKEKAQKKGETSSSSAVAEV. Residues 286-295 are compositionally biased toward basic and acidic residues; sequence TKEKAQKKGE. Residues 286-305 form a disordered region; the sequence is TKEKAQKKGETSSSSAVAEV. A compositionally biased stretch (polar residues) spans 296 to 305; the sequence is TSSSSAVAEV.

It belongs to the MIP/aquaporin (TC 1.A.8) family.

It localises to the endoplasmic reticulum membrane. The protein localises to the cell membrane. Water channel required to facilitate the transport of water across membranes. Involved in sporulation, freeze tolerance and osmotolerance. Is non-functional in most laboratory strains. This is Aquaporin-1 (AQY1) from Saccharomyces cerevisiae (strain ATCC 204508 / S288c) (Baker's yeast).